The primary structure comprises 325 residues: Interleukin-10 receptor subunit beta (325 aa).

Residues Met-1–Gly-19 form the signal peptide. At Met-20 to Ser-220 the chain is on the extracellular side. Fibronectin type-III domains lie at Pro-23 to Thr-111 and Gly-114 to Glu-216. N-linked (GlcNAc...) asparagine glycans are attached at residues Asn-49, Asn-68, Asn-102, and Asn-161. Cys-66 and Cys-74 are disulfide-bonded. The cysteines at positions 188 and 209 are disulfide-linked. The chain crosses the membrane as a helical span at residues Trp-221–Phe-242. Topologically, residues Ala-243–Ser-325 are cytoplasmic. The disordered stretch occupies residues Asp-301–Ser-325. Over residues Gly-305 to Leu-315 the composition is skewed to polar residues.

This sequence belongs to the type II cytokine receptor family. Heterodimer with IFNLR1.

It localises to the membrane. In terms of biological role, shared cell surface receptor required for the activation of five class 2 cytokines: IL10, IL22, IL26, IL28, and IFNL1. The IFNLR1/IL10RB dimer is a receptor for the cytokine ligands IFNL2 and IFNL3 and mediates their antiviral activity. The ligand/receptor complex stimulate the activation of the JAK/STAT signaling pathway leading to the expression of IFN-stimulated genes (ISG), which contribute to the antiviral state. The polypeptide is Interleukin-10 receptor subunit beta (IL10RB) (Homo sapiens (Human)).